A 390-amino-acid polypeptide reads, in one-letter code: Chorismate synthase (390 aa).

Arg-40 and Arg-46 together coordinate NADP(+). FMN is bound by residues Arg-128 to Ser-130, Gln-251 to Ala-252, Gly-296, Lys-311 to Thr-315, and Arg-339.

This sequence belongs to the chorismate synthase family. In terms of assembly, homotetramer. It depends on FMNH2 as a cofactor.

The catalysed reaction is 5-O-(1-carboxyvinyl)-3-phosphoshikimate = chorismate + phosphate. It functions in the pathway metabolic intermediate biosynthesis; chorismate biosynthesis; chorismate from D-erythrose 4-phosphate and phosphoenolpyruvate: step 7/7. Functionally, catalyzes the anti-1,4-elimination of the C-3 phosphate and the C-6 proR hydrogen from 5-enolpyruvylshikimate-3-phosphate (EPSP) to yield chorismate, which is the branch point compound that serves as the starting substrate for the three terminal pathways of aromatic amino acid biosynthesis. This reaction introduces a second double bond into the aromatic ring system. In Sulfurihydrogenibium sp. (strain YO3AOP1), this protein is Chorismate synthase.